A 331-amino-acid chain; its full sequence is Ketol-acid reductoisomerase (NADP(+)) (331 aa).

Residues 2 to 182 form the KARI N-terminal Rossmann domain; sequence AQLFYDTDAD…GGTRAGILET (181 aa). NADP(+)-binding positions include 25–28, S51, S53, and 83–86; these read YGSQ and DEFQ. Residue H108 is part of the active site. G134 serves as a coordination point for NADP(+). In terms of domain architecture, KARI C-terminal knotted spans 183–328; that stretch reads NFKEETETDL…KGLRSMFSWL (146 aa). Mg(2+)-binding residues include D191, E195, E227, and E231. S252 is a binding site for substrate.

It belongs to the ketol-acid reductoisomerase family. Mg(2+) serves as cofactor.

The enzyme catalyses (2R)-2,3-dihydroxy-3-methylbutanoate + NADP(+) = (2S)-2-acetolactate + NADPH + H(+). The catalysed reaction is (2R,3R)-2,3-dihydroxy-3-methylpentanoate + NADP(+) = (S)-2-ethyl-2-hydroxy-3-oxobutanoate + NADPH + H(+). The protein operates within amino-acid biosynthesis; L-isoleucine biosynthesis; L-isoleucine from 2-oxobutanoate: step 2/4. It participates in amino-acid biosynthesis; L-valine biosynthesis; L-valine from pyruvate: step 2/4. Functionally, involved in the biosynthesis of branched-chain amino acids (BCAA). Catalyzes an alkyl-migration followed by a ketol-acid reduction of (S)-2-acetolactate (S2AL) to yield (R)-2,3-dihydroxy-isovalerate. In the isomerase reaction, S2AL is rearranged via a Mg-dependent methyl migration to produce 3-hydroxy-3-methyl-2-ketobutyrate (HMKB). In the reductase reaction, this 2-ketoacid undergoes a metal-dependent reduction by NADPH to yield (R)-2,3-dihydroxy-isovalerate. The chain is Ketol-acid reductoisomerase (NADP(+)) from Synechococcus sp. (strain WH7803).